Reading from the N-terminus, the 242-residue chain is 4-hydroxy-tetrahydrodipicolinate reductase (242 aa).

Residues 8–13 (GAKGRM), 75–77 (GTT), and 99–102 (ATNM) contribute to the NAD(+) site. Residue histidine 131 is the Proton donor/acceptor of the active site. Histidine 132 is a (S)-2,3,4,5-tetrahydrodipicolinate binding site. Lysine 135 acts as the Proton donor in catalysis. Position 141–142 (141–142 (GT)) interacts with (S)-2,3,4,5-tetrahydrodipicolinate.

Belongs to the DapB family.

The protein localises to the cytoplasm. It catalyses the reaction (S)-2,3,4,5-tetrahydrodipicolinate + NAD(+) + H2O = (2S,4S)-4-hydroxy-2,3,4,5-tetrahydrodipicolinate + NADH + H(+). The catalysed reaction is (S)-2,3,4,5-tetrahydrodipicolinate + NADP(+) + H2O = (2S,4S)-4-hydroxy-2,3,4,5-tetrahydrodipicolinate + NADPH + H(+). Its pathway is amino-acid biosynthesis; L-lysine biosynthesis via DAP pathway; (S)-tetrahydrodipicolinate from L-aspartate: step 4/4. Catalyzes the conversion of 4-hydroxy-tetrahydrodipicolinate (HTPA) to tetrahydrodipicolinate. The polypeptide is 4-hydroxy-tetrahydrodipicolinate reductase (Campylobacter jejuni subsp. jejuni serotype O:2 (strain ATCC 700819 / NCTC 11168)).